The primary structure comprises 369 residues: S-(hydroxymethyl)glutathione dehydrogenase (369 aa).

Zn(2+) contacts are provided by Cys-40, His-62, Cys-92, Cys-95, Cys-98, Cys-106, and Cys-169.

The protein belongs to the zinc-containing alcohol dehydrogenase family. Class-III subfamily. Homodimer. It depends on Zn(2+) as a cofactor.

The protein resides in the cytoplasm. It catalyses the reaction S-(hydroxymethyl)glutathione + NADP(+) = S-formylglutathione + NADPH + H(+). The enzyme catalyses S-(hydroxymethyl)glutathione + NAD(+) = S-formylglutathione + NADH + H(+). The catalysed reaction is a primary alcohol + NAD(+) = an aldehyde + NADH + H(+). It carries out the reaction a secondary alcohol + NAD(+) = a ketone + NADH + H(+). It catalyses the reaction S-nitrosoglutathione + NADH + H(+) = S-(hydroxysulfenamide)glutathione + NAD(+). Has high formaldehyde dehydrogenase activity in the presence of glutathione and catalyzes the oxidation of normal alcohols in a reaction that is not GSH-dependent. In addition, hemithiolacetals other than those formed from GSH, including omega-thiol fatty acids, also are substrates. Also acts as a S-nitroso-glutathione reductase by catalyzing the NADH-dependent reduction of S-nitrosoglutathione. This Escherichia coli (strain ATCC 8739 / DSM 1576 / NBRC 3972 / NCIMB 8545 / WDCM 00012 / Crooks) protein is S-(hydroxymethyl)glutathione dehydrogenase (frmA).